A 222-amino-acid polypeptide reads, in one-letter code: Probable transaldolase (222 aa).

Lys91 (schiff-base intermediate with substrate) is an active-site residue.

Belongs to the transaldolase family. Type 3B subfamily.

The protein resides in the cytoplasm. It carries out the reaction D-sedoheptulose 7-phosphate + D-glyceraldehyde 3-phosphate = D-erythrose 4-phosphate + beta-D-fructose 6-phosphate. The protein operates within carbohydrate degradation; pentose phosphate pathway; D-glyceraldehyde 3-phosphate and beta-D-fructose 6-phosphate from D-ribose 5-phosphate and D-xylulose 5-phosphate (non-oxidative stage): step 2/3. Transaldolase is important for the balance of metabolites in the pentose-phosphate pathway. The chain is Probable transaldolase from Chlorobium luteolum (strain DSM 273 / BCRC 81028 / 2530) (Pelodictyon luteolum).